The following is a 344-amino-acid chain: Anthranilate phosphoribosyltransferase (344 aa).

5-phospho-alpha-D-ribose 1-diphosphate-binding positions include Gly84, 87 to 88 (GD), Thr92, 94 to 97 (NIST), 112 to 120 (KHGNRSVSS), and Ser124. Position 84 (Gly84) interacts with anthranilate. Mg(2+) is bound at residue Ser96. Asn115 is an anthranilate binding site. Residue Arg170 coordinates anthranilate. Mg(2+)-binding residues include Asp229 and Glu230.

It belongs to the anthranilate phosphoribosyltransferase family. In terms of assembly, homodimer. Mg(2+) is required as a cofactor.

The enzyme catalyses N-(5-phospho-beta-D-ribosyl)anthranilate + diphosphate = 5-phospho-alpha-D-ribose 1-diphosphate + anthranilate. It functions in the pathway amino-acid biosynthesis; L-tryptophan biosynthesis; L-tryptophan from chorismate: step 2/5. In terms of biological role, catalyzes the transfer of the phosphoribosyl group of 5-phosphorylribose-1-pyrophosphate (PRPP) to anthranilate to yield N-(5'-phosphoribosyl)-anthranilate (PRA). In Xylella fastidiosa (strain 9a5c), this protein is Anthranilate phosphoribosyltransferase.